Reading from the N-terminus, the 425-residue chain is MAFLALGINHKTASVDVRERVAFTPEQLVDALQQLCRLTASREAAILSTCNRSELYIEQDQLSAEAVLQWLADYHRLSLDELRASAYIHEEHDAVRHMMRVASGLDSLVLGEPQILGQMKSAYAVAREAGTVGPLLGRLFQATFSAAKQVRTDTAIGENPVSVAFAAVSLARQIFSDLGRSQALLIGAGETITLVARHLHEQGVRRIVVANRTLERASLLAEQFGAHAVLLADIPQELAHSDIVISSTASQLPILGKGAVESALKQRRHKPIFMVDIAVPRDIEPEVGELDDVYLYTVDDLHEVVAENLKSRQGAAQAAEELVSVGAEDFMVRLRELAAVDVLRAYRQQSERLRDEELQKAQRLLANGGNPEDVLAQLARGLTNKLLHAPSVQLKKLSAEGRLDALAMAQELFALNEGSTDKSLQ.

Residues Thr49–Arg52, Ser107, Glu112–Gln114, and Gln118 each bind substrate. Residue Cys50 is the Nucleophile of the active site. Gly187 to Ile192 contacts NADP(+).

It belongs to the glutamyl-tRNA reductase family. Homodimer.

The catalysed reaction is (S)-4-amino-5-oxopentanoate + tRNA(Glu) + NADP(+) = L-glutamyl-tRNA(Glu) + NADPH + H(+). The protein operates within porphyrin-containing compound metabolism; protoporphyrin-IX biosynthesis; 5-aminolevulinate from L-glutamyl-tRNA(Glu): step 1/2. In terms of biological role, catalyzes the NADPH-dependent reduction of glutamyl-tRNA(Glu) to glutamate 1-semialdehyde (GSA). This chain is Glutamyl-tRNA reductase, found in Pseudomonas putida (strain W619).